The primary structure comprises 163 residues: Nucleotide-binding protein BCG9842_B4128 (163 aa).

Belongs to the YajQ family.

In terms of biological role, nucleotide-binding protein. In Bacillus cereus (strain G9842), this protein is Nucleotide-binding protein BCG9842_B4128.